Here is a 266-residue protein sequence, read N- to C-terminus: Energy-coupling factor transporter transmembrane protein EcfT 1 (266 aa).

5 consecutive transmembrane segments (helical) span residues 33 to 53 (IGIL…LFTL), 73 to 93 (LIWL…GGTI), 107 to 127 (LLNG…STVI), 152 to 172 (VPVN…PTLM), and 243 to 263 (HFGD…LVIL).

The protein belongs to the energy-coupling factor EcfT family. In terms of assembly, forms a stable energy-coupling factor (ECF) transporter complex composed of 2 membrane-embedded substrate-binding proteins (S component), 2 ATP-binding proteins (A component) and 2 transmembrane proteins (T component). May be able to interact with more than 1 S component at a time.

Its subcellular location is the cell membrane. Its function is as follows. Transmembrane (T) component of an energy-coupling factor (ECF) ABC-transporter complex. Unlike classic ABC transporters this ECF transporter provides the energy necessary to transport a number of different substrates. This Listeria monocytogenes serotype 1/2a (strain 08-5578) protein is Energy-coupling factor transporter transmembrane protein EcfT 1.